We begin with the raw amino-acid sequence, 513 residues long: Maturase K (513 aa).

This sequence belongs to the intron maturase 2 family. MatK subfamily.

The protein localises to the plastid. Its subcellular location is the chloroplast. Functionally, usually encoded in the trnK tRNA gene intron. Probably assists in splicing its own and other chloroplast group II introns. In Saccharum officinarum (Sugarcane), this protein is Maturase K.